Here is a 335-residue protein sequence, read N- to C-terminus: Probable BOI-related E3 ubiquitin-protein ligase 3 (335 aa).

The tract at residues 196 to 232 (LEEKVKSLCVENQIWRDVAQSNEATVNALRSNLQQVL) is WRD domain. Residues 287–322 (CRSCGKGEASVLLLPCRHMCLCSVCGSSLNTCPICK) form an RING-type zinc finger.

Interacts with the DELLA proteins GAI, RGA, RGL1, RGL2 and RGL3.

The catalysed reaction is S-ubiquitinyl-[E2 ubiquitin-conjugating enzyme]-L-cysteine + [acceptor protein]-L-lysine = [E2 ubiquitin-conjugating enzyme]-L-cysteine + N(6)-ubiquitinyl-[acceptor protein]-L-lysine.. The protein operates within protein degradation; proteasomal ubiquitin-dependent pathway. Functionally, probable E3 ubiquitin-protein ligase. Has no effect on the stability of the DELLA proteins. This Arabidopsis thaliana (Mouse-ear cress) protein is Probable BOI-related E3 ubiquitin-protein ligase 3 (BRG3).